We begin with the raw amino-acid sequence, 505 residues long: Maturase K (505 aa).

The protein belongs to the intron maturase 2 family. MatK subfamily.

It is found in the plastid. Its subcellular location is the chloroplast. In terms of biological role, usually encoded in the trnK tRNA gene intron. Probably assists in splicing its own and other chloroplast group II introns. The protein is Maturase K of Cubanola domingensis.